Here is a 245-residue protein sequence, read N- to C-terminus: Acetoacetate decarboxylase (245 aa).

K116 acts as the Schiff-base intermediate with acetoacetate in catalysis.

The protein belongs to the ADC family.

It catalyses the reaction acetoacetate + H(+) = acetone + CO2. In terms of biological role, catalyzes the conversion of acetoacetate to acetone and carbon dioxide. This chain is Acetoacetate decarboxylase, found in Acidiphilium cryptum (strain JF-5).